The primary structure comprises 425 residues: Glutamate-1-semialdehyde 2,1-aminomutase (425 aa).

K265 is modified (N6-(pyridoxal phosphate)lysine).

Belongs to the class-III pyridoxal-phosphate-dependent aminotransferase family. HemL subfamily. In terms of assembly, homodimer. Pyridoxal 5'-phosphate serves as cofactor.

It is found in the cytoplasm. The enzyme catalyses (S)-4-amino-5-oxopentanoate = 5-aminolevulinate. It participates in porphyrin-containing compound metabolism; protoporphyrin-IX biosynthesis; 5-aminolevulinate from L-glutamyl-tRNA(Glu): step 2/2. The chain is Glutamate-1-semialdehyde 2,1-aminomutase from Laribacter hongkongensis (strain HLHK9).